Reading from the N-terminus, the 261-residue chain is Syntaxin-7 (261 aa).

Ser-2 bears the N-acetylserine mark. The Cytoplasmic segment spans residues 2-238 (SYTPGVGGDP…DYQRKSRKTL (237 aa)). A Phosphothreonine modification is found at Thr-4. Ser-45 carries the post-translational modification Phosphoserine. A coiled-coil region spans residues 47-69 (ELRQQLQQKQQYTNQLAKETDKY). Phosphoserine is present on Ser-75. Position 79 is a phosphothreonine (Thr-79). Phosphoserine occurs at positions 125, 126, 129, and 205. Residues 129 to 148 (SGSFPEDSSKERNLVSWESQ) form a disordered region. One can recognise a t-SNARE coiled-coil homology domain in the interval 165-227 (LRLIHERESS…QQANQQLSRA (63 aa)). The chain crosses the membrane as a helical; Anchor for type IV membrane protein span at residues 239–259 (CIIILILVIGVAIISLIIWGL). The Vesicular portion of the chain corresponds to 260 to 261 (NH).

It belongs to the syntaxin family. Forms a SNARE complex with VTI1B, STX8 and VAMP8 which functions in the homotypic fusion of late endosomes. Component of the SNARE complex composed of STX7, STX8, VAMP7 and VTI1B that is required for heterotypic fusion of late endosomes with lysosomes. Interacts with VPS11, VPS16 and VPS18. Interacts with VPS33A. Interacts with TPC1. Highest expression is found in placenta followed by heart, skeletal muscle, kidney and brain. Low expression is found in pancreas, lung and liver.

It is found in the early endosome membrane. Functionally, may be involved in protein trafficking from the plasma membrane to the early endosome (EE) as well as in homotypic fusion of endocytic organelles. Mediates the endocytic trafficking from early endosomes to late endosomes and lysosomes. In Homo sapiens (Human), this protein is Syntaxin-7 (STX7).